The primary structure comprises 337 residues: G-protein coupled receptor 26 (337 aa).

The Extracellular segment spans residues 1-10; it reads MNSWDAGLAG. A helical transmembrane segment spans residues 11–31; the sequence is LLVGTIGVSLLSNGLVLLCLL. The Cytoplasmic segment spans residues 32 to 47; the sequence is HSADIRRQAPALFTLN. A helical transmembrane segment spans residues 48-68; the sequence is LTCGNLLCTVVNMPLTLAGVV. The Extracellular portion of the chain corresponds to 69–81; sequence AQRQPAGDRLCRL. Cys-79 and Cys-156 are joined by a disulfide. Residues 82 to 102 traverse the membrane as a helical segment; it reads AAFLDTFLAANSMLSMAALSI. Topologically, residues 103 to 123 are cytoplasmic; it reads DRWVAVVFPLSYRAKMRLRDA. Residues 124–144 traverse the membrane as a helical segment; sequence AFMVAYTWLHALTFPATALAL. Over 145–168 the chain is Extracellular; that stretch reads SWLGFHQLYASCTLCSRRPDERLR. A helical transmembrane segment spans residues 169–189; sequence FAVFTSAFHALSFLLSFIVLC. The Cytoplasmic segment spans residues 190–245; the sequence is FTYLKVLKVARFHCKRIDVITMQTLVLLVDIHPSVRERCLEEQKRRRQRATKKIST. The chain crosses the membrane as a helical span at residues 246 to 266; the sequence is FIGTFLVCFAPYVITRLVELF. Residues 267–276 are Extracellular-facing; it reads STAPIGSHWG. The chain crosses the membrane as a helical span at residues 277 to 297; the sequence is VLSKCLAYSKAASDPFVYSLL. Topologically, residues 298-337 are cytoplasmic; that stretch reads RHQYRRSCKELLNRIFNRRSLHSVGLTGDSHSQNILPVSE.

Belongs to the G-protein coupled receptor 1 family. Exclusively expressed in the brain. Prominent expression is detected throughout the entire neocortex at all rostrocaudal and dorsoventral levels. Strong expression is detected in olfactory and auditory sensory areas.

It is found in the cell membrane. Functionally, orphan receptor. Displays a significant level of constitutive activity. Its effect is mediated by G(s)-alpha protein that stimulate adenylate cyclase, resulting in an elevation of intracellular cAMP. This Mus musculus (Mouse) protein is G-protein coupled receptor 26 (Gpr26).